Here is a 309-residue protein sequence, read N- to C-terminus: 2-phospho-L-lactate transferase (309 aa).

Asp50 and Lys89 together coordinate 7,8-didemethyl-8-hydroxy-5-deazariboflavin.

It belongs to the CofD family. In terms of assembly, homodimer. Mg(2+) serves as cofactor.

It catalyses the reaction (2S)-lactyl-2-diphospho-5'-guanosine + 7,8-didemethyl-8-hydroxy-5-deazariboflavin = oxidized coenzyme F420-0 + GMP + H(+). Its pathway is cofactor biosynthesis; coenzyme F420 biosynthesis. Its function is as follows. Catalyzes the transfer of the 2-phospholactate moiety from (2S)-lactyl-2-diphospho-5'-guanosine to 7,8-didemethyl-8-hydroxy-5-deazariboflavin (FO) with the formation of oxidized coenzyme F420-0 and GMP. This chain is 2-phospho-L-lactate transferase, found in Methanococcus maripaludis (strain C7 / ATCC BAA-1331).